A 157-amino-acid chain; its full sequence is MSRRKKTFKREIIPDPVFKDLVIAKFINKMMIQGRKATSQKLFYGALKELEGKVQGEEPLAVFKKALENVKPSIEVRSRRVGGATYQVPVDVRPSRRLALAMRWLVEYSRERGEKDMAKRLAGEFLDAYNNRGNAIKKKDDVHRMAESNKAFSHYNW.

The protein belongs to the universal ribosomal protein uS7 family. As to quaternary structure, part of the 30S ribosomal subunit. Contacts proteins S9 and S11.

Functionally, one of the primary rRNA binding proteins, it binds directly to 16S rRNA where it nucleates assembly of the head domain of the 30S subunit. Is located at the subunit interface close to the decoding center, probably blocks exit of the E-site tRNA. This chain is Small ribosomal subunit protein uS7, found in Bdellovibrio bacteriovorus (strain ATCC 15356 / DSM 50701 / NCIMB 9529 / HD100).